We begin with the raw amino-acid sequence, 226 residues long: ATP synthase F(0) complex subunit a (226 aa).

The next 6 helical transmembrane spans lie at 14-34 (ILGI…FSAP), 68-88 (WTLM…LGLL), 97-117 (QLSM…LMGF), 138-158 (IPML…ALAV), 164-184 (ITAG…LSSI), and 193-213 (FTIL…QAYV).

Belongs to the ATPase A chain family. Component of the ATP synthase complex composed at least of ATP5F1A/subunit alpha, ATP5F1B/subunit beta, ATP5MC1/subunit c (homooctomer), MT-ATP6/subunit a, MT-ATP8/subunit 8, ATP5ME/subunit e, ATP5MF/subunit f, ATP5MG/subunit g, ATP5MK/subunit k, ATP5MJ/subunit j, ATP5F1C/subunit gamma, ATP5F1D/subunit delta, ATP5F1E/subunit epsilon, ATP5PF/subunit F6, ATP5PB/subunit b, ATP5PD/subunit d, ATP5PO/subunit OSCP. ATP synthase complex consists of a soluble F(1) head domain (subunits alpha(3) and beta(3)) - the catalytic core - and a membrane F(0) domain - the membrane proton channel (subunits c, a, 8, e, f, g, k and j). These two domains are linked by a central stalk (subunits gamma, delta, and epsilon) rotating inside the F1 region and a stationary peripheral stalk (subunits F6, b, d, and OSCP). Interacts with DNAJC30; interaction is direct.

Its subcellular location is the mitochondrion inner membrane. The enzyme catalyses H(+)(in) = H(+)(out). Its function is as follows. Subunit a, of the mitochondrial membrane ATP synthase complex (F(1)F(0) ATP synthase or Complex V) that produces ATP from ADP in the presence of a proton gradient across the membrane which is generated by electron transport complexes of the respiratory chain. ATP synthase complex consist of a soluble F(1) head domain - the catalytic core - and a membrane F(1) domain - the membrane proton channel. These two domains are linked by a central stalk rotating inside the F(1) region and a stationary peripheral stalk. During catalysis, ATP synthesis in the catalytic domain of F(1) is coupled via a rotary mechanism of the central stalk subunits to proton translocation. With the subunit c (ATP5MC1), forms the proton-conducting channel in the F(0) domain, that contains two crucial half-channels (inlet and outlet) that facilitate proton movement from the mitochondrial intermembrane space (IMS) into the matrix. Protons are taken up via the inlet half-channel and released through the outlet half-channel, following a Grotthuss mechanism. This chain is ATP synthase F(0) complex subunit a, found in Tachyglossus aculeatus aculeatus (Southeast Australian short-beaked echidna).